The primary structure comprises 308 residues: Sulfoquinovosyl glycerol transport system permease protein SmoG (308 aa).

The next 6 membrane-spanning stretches (helical) occupy residues 28–48 (LAVL…VYPV), 92–112 (VLIT…LALL), 126–146 (SLLI…AWFF), 164–184 (GIIW…TIIW), 223–243 (ITLP…TITA), and 279–299 (LGYG…VTAV). Residues 88–300 (TWNTVLITLI…ALSMCVTAVY (213 aa)) form the ABC transmembrane type-1 domain.

This sequence belongs to the binding-protein-dependent transport system permease family. In terms of assembly, the complex is probably composed of two ATP-binding proteins (SmoE), two transmembrane proteins (SmoG and SmoH) and a solute-binding protein (SmoF).

It localises to the cell inner membrane. In terms of biological role, part of the ABC transporter complex SmoEFGH involved in sulfoquinovosyl glycerol (SQGro) uptake. Responsible for the translocation of the substrate across the membrane. This is Sulfoquinovosyl glycerol transport system permease protein SmoG from Agrobacterium fabrum (strain C58 / ATCC 33970) (Agrobacterium tumefaciens (strain C58)).